Reading from the N-terminus, the 250-residue chain is DNA repair protein RecO (250 aa).

This sequence belongs to the RecO family.

Functionally, involved in DNA repair and RecF pathway recombination. The protein is DNA repair protein RecO of Lactobacillus helveticus (strain DPC 4571).